Here is a 465-residue protein sequence, read N- to C-terminus: Cysteine--tRNA ligase (465 aa).

C30 lines the Zn(2+) pocket. The short motif at 32 to 42 (MTVYDYCHVGH) is the 'HIGH' region element. The Zn(2+) site is built by C214, H239, and E243. The 'KMSKS' region signature appears at 271–275 (KMSKS). K274 contacts ATP.

Belongs to the class-I aminoacyl-tRNA synthetase family. In terms of assembly, monomer. Zn(2+) serves as cofactor.

Its subcellular location is the cytoplasm. The enzyme catalyses tRNA(Cys) + L-cysteine + ATP = L-cysteinyl-tRNA(Cys) + AMP + diphosphate. In Ralstonia nicotianae (strain ATCC BAA-1114 / GMI1000) (Ralstonia solanacearum), this protein is Cysteine--tRNA ligase.